The sequence spans 161 residues: RNA pyrophosphohydrolase (161 aa).

A Nudix hydrolase domain is found at 12-154 (PYRIGVGMVI…KRKLYKAVIN (143 aa)). The short motif at 46–67 (GGIILGETYSKAVLREMKEEIG) is the Nudix box element.

It belongs to the Nudix hydrolase family. RppH subfamily. Requires a divalent metal cation as cofactor.

Functionally, accelerates the degradation of transcripts by removing pyrophosphate from the 5'-end of triphosphorylated RNA, leading to a more labile monophosphorylated state that can stimulate subsequent ribonuclease cleavage. This is RNA pyrophosphohydrolase from Orientia tsutsugamushi (strain Boryong) (Rickettsia tsutsugamushi).